Consider the following 550-residue polypeptide: Arginine--tRNA ligase (550 aa).

Positions 130-140 match the 'HIGH' region motif; that stretch reads ANPTGPIHIGG.

Belongs to the class-I aminoacyl-tRNA synthetase family. As to quaternary structure, monomer.

Its subcellular location is the cytoplasm. The catalysed reaction is tRNA(Arg) + L-arginine + ATP = L-arginyl-tRNA(Arg) + AMP + diphosphate. The chain is Arginine--tRNA ligase from Mycobacterium marinum (strain ATCC BAA-535 / M).